The following is an 861-amino-acid chain: E3 ubiquitin-protein ligase SH3RF1 (861 aa).

The segment at 12 to 53 (CPVCLERLDASAKVLPCQHTFCKRCLLGIVSSRNELRCPECR) adopts an RING-type zinc-finger fold. 2 consecutive SH3 domains span residues 132 to 191 (PQLP…IIKP) and 194 to 257 (QPPP…FNSA). A disordered region spans residues 268-319 (SGVDTGEGSSGTTHSSNSQKQADAKKNTKKRHSFTSLTMSNKSSQSVQNRHS). Low complexity predominate over residues 273–285 (GEGSSGTTHSSNS). The segment covering 301–317 (FTSLTMSNKSSQSVQNR) has biased composition (polar residues). The 62-residue stretch at 435-496 (TRPSVFVAIY…PGNYVAPVTR (62 aa)) folds into the SH3 3 domain. The tract at residues 684–731 (NSAANKQDKDSKKEKKGLLKLLSGASTKRKPRSSPPHSPTQELEQTNS) is disordered. A compositionally biased stretch (basic and acidic residues) spans 689 to 700 (KQDKDSKKEKKG). The 60-residue stretch at 802–861 (RPCERYRVVVSYPPQSEAELELKEGDIVFVHKKREDGWFKGTLQRNGKTGLFPGSFVENI) folds into the SH3 4 domain.

Belongs to the SH3RF family. Post-translationally, autoubiquitinated. Ubiquitinated by SH3RF2, leading to proteasome-mediated degradation.

The protein resides in the cytoplasm. The protein localises to the perinuclear region. It is found in the cell projection. Its subcellular location is the lamellipodium. It localises to the golgi apparatus. The protein resides in the trans-Golgi network. The catalysed reaction is S-ubiquitinyl-[E2 ubiquitin-conjugating enzyme]-L-cysteine + [acceptor protein]-L-lysine = [E2 ubiquitin-conjugating enzyme]-L-cysteine + N(6)-ubiquitinyl-[acceptor protein]-L-lysine.. It participates in protein modification; protein ubiquitination. Has E3 ubiquitin-protein ligase activity. In the absence of an external substrate, it can catalyze self-ubiquitination. Acts as a scaffold protein that contributes to the effective activation of the JNK signaling pathway. The polypeptide is E3 ubiquitin-protein ligase SH3RF1 (sh3rf1) (Xenopus tropicalis (Western clawed frog)).